Reading from the N-terminus, the 594-residue chain is Jacalin-related lectin 44 (594 aa).

Residues 1 to 23 are disordered; the sequence is MIQKLGAKGIKSDERNQREWDDG. Jacalin-type lectin domains lie at 2-148, 151-293, 296-441, and 448-588; these read IQKL…YFIS, PTRL…YFST, PNKL…YYRP, and VKRL…HVIP. Residues 10–23 are compositionally biased toward basic and acidic residues; that stretch reads IKSDERNQREWDDG.

The protein belongs to the jacalin lectin family.

The sequence is that of Jacalin-related lectin 44 (JAL44) from Arabidopsis thaliana (Mouse-ear cress).